The sequence spans 382 residues: Opsin Rh5 (382 aa).

Over 1–49 the chain is Extracellular; it reads MHINGPSGPQAYVNDSLGDGSVFPMGHGYPAEYQHMVHAHWRGFREAPI. Asparagine 14 is a glycosylation site (N-linked (GlcNAc...) asparagine). Residues 50-76 form a helical membrane-spanning segment; that stretch reads YYHAGFYIAFIVLMLSSIFGNGLVIWI. The Cytoplasmic segment spans residues 77–88; it reads FSTSKSLRTPSN. The helical transmembrane segment at 89-112 threads the bilayer; that stretch reads LLILNLAIFDLFMCTNMPHYLINA. At 113–127 the chain is on the extracellular side; that stretch reads TVGYIVGGDLGCDIY. An intrachain disulfide couples cysteine 124 to cysteine 201. A helical transmembrane segment spans residues 128 to 147; that stretch reads ALNGGISGMGASITNAFIAF. The Cytoplasmic segment spans residues 148–165; the sequence is DRYKTISNPIDGRLSYGQ. The helical transmembrane segment at 166 to 190 threads the bilayer; it reads IVLLILFTWLWATPFSVLPLFQIWG. At 191 to 214 the chain is on the extracellular side; sequence RYQPEGFLTTCSFDYLTNTDENRL. Residues 215–242 form a helical membrane-spanning segment; it reads FVRTIFVWSYVIPMTMILVSYYKLFTHV. The Cytoplasmic segment spans residues 243–278; it reads RVHEKMLAEQAKKMNVKSLSANANADNMSVELRIAK. Residues 279 to 302 form a helical membrane-spanning segment; sequence AALIIYMLFILAWTPYSVVALIGC. Residues 303–310 lie on the Extracellular side of the membrane; it reads FGEQQLIT. A helical membrane pass occupies residues 311 to 335; it reads PFVSMLPCLACKSVSCLDPWVYATS. Residue lysine 322 is modified to N6-(retinylidene)lysine. The Cytoplasmic segment spans residues 336 to 382; sequence HPKYRLELERRLPWLGIREKHATSGTSGGQESVASVSGDTLALSVQN. Positions 357-382 are disordered; sequence ATSGTSGGQESVASVSGDTLALSVQN. Residues 358 to 382 show a composition bias toward polar residues; sequence TSGTSGGQESVASVSGDTLALSVQN.

This sequence belongs to the G-protein coupled receptor 1 family. Opsin subfamily. Post-translationally, phosphorylated on some or all of the serine and threonine residues present in the C-terminal region. Expressed specifically in the retina. Each Drosophila eye is composed of 800 facets or ommatidia. Each ommatidium contains 8 photoreceptor cells (R1-R8), the R1 to R6 cells are outer cells, while R7 and R8 are inner cells. Rh5 is expressed only in R8 photoreceptor cells in a subset of ommatidia.

The protein localises to the cell projection. Its subcellular location is the rhabdomere membrane. Visual pigments are the light-absorbing molecules that mediate vision. They consist of an apoprotein, opsin, covalently linked to cis-retinal. In Drosophila melanogaster (Fruit fly), this protein is Opsin Rh5 (Rh5).